A 318-amino-acid polypeptide reads, in one-letter code: Pyrimidine-specific ribonucleoside hydrolase RihA (318 aa).

H240 is an active-site residue.

It belongs to the IUNH family. RihA subfamily.

Its function is as follows. Hydrolyzes cytidine or uridine to ribose and cytosine or uracil, respectively. The sequence is that of Pyrimidine-specific ribonucleoside hydrolase RihA from Shewanella sp. (strain MR-4).